Consider the following 343-residue polypeptide: Small ribosomal subunit biogenesis GTPase RsgA (343 aa).

Residues 116 to 275 (HGQLKPVAAN…LIDSPGIREF (160 aa)) form the CP-type G domain. GTP is bound by residues 163 to 166 (NKAD) and 217 to 225 (GQSGVGKSS). Zn(2+) is bound by residues Cys-299, Cys-304, His-306, and Cys-312.

It belongs to the TRAFAC class YlqF/YawG GTPase family. RsgA subfamily. As to quaternary structure, monomer. Associates with 30S ribosomal subunit, binds 16S rRNA. Requires Zn(2+) as cofactor.

It localises to the cytoplasm. Its function is as follows. One of several proteins that assist in the late maturation steps of the functional core of the 30S ribosomal subunit. Helps release RbfA from mature subunits. May play a role in the assembly of ribosomal proteins into the subunit. Circularly permuted GTPase that catalyzes slow GTP hydrolysis, GTPase activity is stimulated by the 30S ribosomal subunit. The chain is Small ribosomal subunit biogenesis GTPase RsgA from Pseudomonas putida (strain ATCC 700007 / DSM 6899 / JCM 31910 / BCRC 17059 / LMG 24140 / F1).